Consider the following 179-residue polypeptide: Large ribosomal subunit protein uL5c (179 aa).

It belongs to the universal ribosomal protein uL5 family. Part of the 50S ribosomal subunit; contacts the 5S rRNA.

It is found in the plastid. Binds 5S rRNA, forms part of the central protuberance of the 50S subunit. The chain is Large ribosomal subunit protein uL5c (rpl5) from Euglena longa (Euglenophycean alga).